The chain runs to 192 residues: Thymidine kinase (192 aa).

Residues 9–16 (SSMNAGKS) and 87–90 (DEAQ) each bind ATP. E88 serves as the catalytic Proton acceptor. The Zn(2+) site is built by C145, C147, C182, and H185.

Belongs to the thymidine kinase family. In terms of assembly, homotetramer.

The protein resides in the cytoplasm. It catalyses the reaction thymidine + ATP = dTMP + ADP + H(+). This Colwellia psychrerythraea (strain 34H / ATCC BAA-681) (Vibrio psychroerythus) protein is Thymidine kinase.